We begin with the raw amino-acid sequence, 448 residues long: Porin AaxA (448 aa).

An N-terminal signal peptide occupies residues 1-24 (MASFRSSLLSALCAYGMMVMPAYA).

Belongs to the OprB family.

The protein resides in the cell outer membrane. Facilitates L-arginine uptake, as part of the AaxABC system. The arginine uptake by the bacterium in the macrophage may be a virulence factor against the host innate immune response. The polypeptide is Porin AaxA (aaxA) (Chlamydia abortus (strain DSM 27085 / S26/3) (Chlamydophila abortus)).